Consider the following 1559-residue polypeptide: Arginine-glutamic acid dipeptide repeats protein (1559 aa).

Positions 1-36 (MTADKDKDKDKEKDRDRDRDRERDKRDKARESENAR) are enriched in basic and acidic residues. Residues 1-89 (MTADKDKDKD…KKKSRYERTD (89 aa)) form a disordered region. A phosphoserine mark is found at S53 and S56. Positions 73 to 84 (KSRKKPPKKKSR) are enriched in basic residues. Residues 102-282 (VVYRPGDCVY…PETRRLNSTQ (181 aa)) form the BAH domain. A Phosphothreonine modification is found at T119. Residues S141 and S303 each carry the phosphoserine modification. The ELM2 domain maps to 283–386 (GEIRVGPSHQ…KALQRLVKKP (104 aa)). The region spanning 390–442 (LIEKCWTEDEVKRFVKGLRQYGKNFFRIRKELLPNKETGELITFYYYWKKTPE) is the SANT domain. Positions 463–494 (TRTASTPVNTPSRPPSSEFLDLSSASEDDFDS) are disordered. A compositionally biased stretch (polar residues) spans 464-473 (RTASTPVNTP). Positions 478–487 (SSEFLDLSSA) are enriched in low complexity. The GATA-type zinc finger occupies 507 to 532 (RHCFTTTSKDWHHGGRENILLCTDCR). The tract at residues 541 to 1125 (LPPIEKPVDP…PSHASQSARF (585 aa)) is disordered. K559 is covalently cross-linked (Glycyl lysine isopeptide (Lys-Gly) (interchain with G-Cter in SUMO2)). Phosphoserine is present on residues S593, S599, and S612. The segment covering 608 to 622 (SGRNSPSAASTSSND) has biased composition (low complexity). Basic and acidic residues predominate over residues 623–639 (SKAEAVKKSAKKVKEEA). K636 participates in a covalent cross-link: Glycyl lysine isopeptide (Lys-Gly) (interchain with G-Cter in SUMO2). Phosphoserine occurs at positions 641, 655, 674, and 678. A compositionally biased stretch (basic and acidic residues) spans 651–672 (EKVASDTEDTDRATSKKTKTQE). The segment covering 687-707 (SDSRSVNDEGSSDPKDIDQDN) has biased composition (basic and acidic residues). Residues 708–735 (RSTSPSIPSPQDNESDSDSSAQQQMLQT) show a composition bias toward polar residues. Over residues 736-761 (QPPALQAPSGAASAPSTAPPGTTQLP) the composition is skewed to low complexity. Over residues 768–791 (SATTVPPQGSPATSQPPNQTQSTV) the composition is skewed to polar residues. The span at 805-822 (LHPPRLPSPHPPLQPMTA) shows a compositional bias: pro residues. Residues 890–900 (QLPASQSALQP) are compositionally biased toward low complexity. Positions 901-931 (QQPPREQPLPPAPLAMPHIKPPPTTPIPQLP) are enriched in pro residues. Residues 961-971 (KPLSSLSTHHP) are compositionally biased toward low complexity. Pro residues predominate over residues 1027 to 1053 (PQHPFVPGGPPPITPPSCPPTSTPPAG). Low complexity predominate over residues 1054–1068 (PSSSSQPPCSAAVSS). Phosphoserine is present on residues S1098, S1105, and S1107. A compositionally biased stretch (pro residues) spans 1098–1109 (SPPPPPRSPSPE). Residue T1111 is modified to Phosphothreonine. A coiled-coil region spans residues 1148 to 1205 (GSKLAKKREEAIEKAKREAEQKAREEREREKEKEKEREREREREREAERAAQKASSSA). K1150 bears the N6-acetyllysine mark. The segment covering 1154 to 1198 (KREEAIEKAKREAEQKAREEREREKEKEKEREREREREREAERAA) has biased composition (basic and acidic residues). Positions 1154 to 1239 (KREEAIEKAK…TTIAAVPPYI (86 aa)) are disordered. Y1252 is subject to Phosphotyrosine. A Phosphoserine modification is found at S1259.

Interacts with HDAC1 and ATN1. Interaction with ATN1 is improved when the poly-Gln region of ATN1 is extended. As to expression, widely expressed.

It is found in the nucleus. Its subcellular location is the PML body. Functionally, plays a role as a transcriptional repressor during development. May play a role in the control of cell survival. Interacts with FAT1. In Rattus norvegicus (Rat), this protein is Arginine-glutamic acid dipeptide repeats protein (Rere).